The sequence spans 111 residues: Nucleoid-associated protein PputGB1_3833 (111 aa).

2 disordered regions span residues 1–25 (MMKG…KMQE) and 87–111 (EQSS…KMPF).

It belongs to the YbaB/EbfC family. As to quaternary structure, homodimer.

Its subcellular location is the cytoplasm. It localises to the nucleoid. Its function is as follows. Binds to DNA and alters its conformation. May be involved in regulation of gene expression, nucleoid organization and DNA protection. This is Nucleoid-associated protein PputGB1_3833 from Pseudomonas putida (strain GB-1).